The following is a 243-amino-acid chain: Orotidine 5'-phosphate decarboxylase (243 aa).

Substrate contacts are provided by residues D19, K41, 69–78 (DLKFFDIPAT), T124, R185, Q194, G214, and R215. K71 functions as the Proton donor in the catalytic mechanism.

Belongs to the OMP decarboxylase family. Type 1 subfamily. As to quaternary structure, homodimer.

It catalyses the reaction orotidine 5'-phosphate + H(+) = UMP + CO2. The protein operates within pyrimidine metabolism; UMP biosynthesis via de novo pathway; UMP from orotate: step 2/2. Catalyzes the decarboxylation of orotidine 5'-monophosphate (OMP) to uridine 5'-monophosphate (UMP). The polypeptide is Orotidine 5'-phosphate decarboxylase (Xanthomonas campestris pv. campestris (strain 8004)).